An 852-amino-acid polypeptide reads, in one-letter code: Homeobox-leucine zipper protein ATHB-14 (852 aa).

Residues 1–25 form a disordered region; that stretch reads MMMVHSMSRDMMNRESPDKGLDSGK. The span at 7–22 shows a compositional bias: basic and acidic residues; the sequence is MSRDMMNRESPDKGLD. Residues 22-85 constitute a DNA-binding region (homeobox); sequence DSGKYVRYTP…NRRCREKQRK (64 aa). The stretch at 80–122 forms a coiled coil; it reads REKQRKEAARLQTVNRKLNAMNKLLMEENDRLQKQVSNLVYEN. Residues 80-130 are ZIP domain; that stretch reads REKQRKEAARLQTVNRKLNAMNKLLMEENDRLQKQVSNLVYENGHMKHQLH. Over residues 130–148 the composition is skewed to polar residues; sequence HTASGTTTDNSCESVVVSG. Residues 130-166 are disordered; it reads HTASGTTTDNSCESVVVSGQQHQQQNPNPQHQQRDAN. The segment covering 149-160 has biased composition (low complexity); the sequence is QQHQQQNPNPQH. Residues 164–392 enclose the START domain; the sequence is DANNPAGLLS…IAQETSGEVQ (229 aa).

This sequence belongs to the HD-ZIP homeobox family. Class III subfamily. In terms of assembly, homodimer. Heterodimer with ZPR3. Interacts with ESR1 and ESR2. Interacts with ZPR3. In terms of tissue distribution, expressed in the center of the meristem and on the adaxial side of the leaves.

Its subcellular location is the nucleus. With respect to regulation, inhibited by ZPR3. Its function is as follows. Probable transcription factor involved in the determination of adaxial-abaxial polarity in ovule primordium. Specifies adaxial leaf fates. The chain is Homeobox-leucine zipper protein ATHB-14 (ATHB-14) from Arabidopsis thaliana (Mouse-ear cress).